The chain runs to 437 residues: Sonic hedgehog protein (437 aa).

Residues methionine 1–alanine 24 form the signal peptide. Cysteine 25 is lipidated: N-palmitoyl cysteine. Positions lysine 33 to lysine 39 match the Cardin-Weintraub motif. Glutamate 90, glutamate 91, aspartate 96, threonine 126, glutamate 127, aspartate 130, and aspartate 132 together coordinate Ca(2+). Zn(2+)-binding residues include histidine 141, aspartate 148, and histidine 183. A lipid anchor (Cholesterol glycine ester) is attached at glycine 198. N-linked (GlcNAc...) asparagine glycosylation is present at asparagine 279.

Belongs to the hedgehog family. As to quaternary structure, interacts with HHATL/GUP1 which negatively regulates HHAT-mediated palmitoylation of the SHH N-terminus. Interacts with BOC and CDON. Interacts with HHIP. Interacts with DISP1 via its cholesterol anchor. Interacts with SCUBE2. Interacts with glypican GPC3. Multimer. The C-terminal domain displays an autoproteolysis activity and a cholesterol transferase activity. Both activities result in the cleavage of the full-length protein and covalent attachment of a cholesterol moiety to the C-terminal of the newly generated N-terminal fragment (ShhN). Cholesterylation is required for the sonic hedgehog protein N-product targeting to lipid rafts and multimerization. ShhN is the active species in both local and long-range signaling, whereas the C-product (ShhC) is degraded in the endoplasmic reticulum. In terms of processing, N-palmitoylation by HHAT of ShhN is required for sonic hedgehog protein N-product multimerization and full activity. It is a prerequisite for the membrane-proximal positioning and the subsequent shedding of this N-terminal peptide. Post-translationally, the lipidated N- and C-terminal peptides of ShhNp can be cleaved (shedding). The N-terminal palmitoylated peptide is cleaved at the Cardin-Weintraub (CW) motif site. The cleavage reduced the interactions with heparan sulfate. The cleavage is enhanced by SCUBE2. Expressed in a number of embryonic tissues including the notochord, ventral neural tube, floor plate, lung bud, zone of polarizing activity and posterior distal mesenchyme of limbs. In the adult, expressed in lung and neural retina.

It is found in the endoplasmic reticulum membrane. The protein localises to the golgi apparatus membrane. It localises to the cell membrane. The enzyme catalyses glycyl-L-cysteinyl-[protein] + cholesterol + H(+) = [protein]-C-terminal glycyl cholesterol ester + N-terminal L-cysteinyl-[protein]. The C-terminal part of the sonic hedgehog protein precursor displays an autoproteolysis and a cholesterol transferase activity. Both activities result in the cleavage of the full-length protein into two parts (ShhN and ShhC) followed by the covalent attachment of a cholesterol moiety to the C-terminal of the newly generated ShhN. Both activities occur in the reticulum endoplasmic. Once cleaved, ShhC is degraded in the endoplasmic reticulum. Functionally, the dually lipidated sonic hedgehog protein N-product (ShhNp) is a morphogen which is essential for a variety of patterning events during development. Induces ventral cell fate in the neural tube and somites. Involved in the patterning of the anterior-posterior axis of the developing limb bud. Essential for axon guidance. Binds to the patched (PTCH1) receptor, which functions in association with smoothened (SMO), to activate the transcription of target genes. In the absence of SHH, PTCH1 represses the constitutive signaling activity of SMO. The protein is Sonic hedgehog protein of Mus musculus (Mouse).